A 62-amino-acid chain; its full sequence is Beta-defensin 37 (62 aa).

The first 16 residues, 1-16 (MKFSYFLLLLLSLSNF), serve as a signal peptide directing secretion. 3 cysteine pairs are disulfide-bonded: cysteine 29–cysteine 58, cysteine 36–cysteine 51, and cysteine 41–cysteine 59.

This sequence belongs to the beta-defensin family. Only expressed in epididymis (corpus and cauda).

It localises to the secreted. Functionally, has antibacterial activity. This Mus musculus (Mouse) protein is Beta-defensin 37 (Defb37).